Consider the following 307-residue polypeptide: Chlorophyll a-b binding protein 1, chloroplastic (307 aa).

The transit peptide at 1-44 (MAPYSVVASVLAAAPPQQSGSVRQLPSTINRAITQRSQSRHVAS) directs the protein to the chloroplast. Residues 34 to 54 (TQRSQSRHVASASSASSPTTM) are disordered. Residues threonine 52, glutamate 63, isoleucine 64, glycine 65, tyrosine 68, leucine 81, proline 86, arginine 89, glycine 90, phenylalanine 91, and aspartate 92 each contribute to the chlorophyll a site. A loroxanthin-binding site is contributed by leucine 96. Residues 111 to 143 (NYDESRLRWLLEGELYNGRLAMLAVVGVLTVEA) form a helical membrane-spanning segment. Chlorophyll a contacts are provided by leucine 120, glutamate 124, asparagine 127, methionine 132, and lysine 146. A loroxanthin-binding site is contributed by tryptophan 149. Glutamate 151, tyrosine 163, histidine 171, glutamate 178, arginine 181, glutamate 190, arginine 198, and aspartate 200 together coordinate chlorophyll a. Residues 161 to 186 (TPYVVAVVGGHLAFALLEKKRLENFR) form a helical membrane-spanning segment. 2 residues coordinate all-trans-violaxanthin: aspartate 200 and leucine 202. 7 residues coordinate chlorophyll a: leucine 204, asparagine 208, tyrosine 214, asparagine 215, alanine 218, asparagine 222, and arginine 224. The chain crosses the membrane as a helical span at residues 213–238 (DYNRQAEVRNCRLAMLTFLGFSVQAW). Phenylalanine 230 contacts loroxanthin. Phenylalanine 233 contacts all-trans-violaxanthin. A chlorophyll a-binding site is contributed by glutamine 236. An all-trans-violaxanthin-binding site is contributed by proline 244. Chlorophyll a-binding residues include asparagine 247, histidine 251, proline 255, phenylalanine 256, alanine 258, asparagine 259, isoleucine 260, and phenylalanine 274. A helical membrane pass occupies residues 265–289 (DRGTNVVAIFSAFAAVMHIAELARE).

Belongs to the light-harvesting chlorophyll a/b-binding (LHC) protein family. As to quaternary structure, homooligomer. Component of a light-harvesting complex (LHC) consisting of 11 chlorophyll a-b binding proteins. Binds 11 chlorophylls (Chl-a and Chl-b) and the 2 carotenoids violaxanthin and loroxanthin. serves as cofactor.

Its subcellular location is the plastid. It is found in the chloroplast thylakoid membrane. Functionally, component of a light-harvesting complex (LHC). The LHC functions as a light receptor, it captures and delivers excitation energy to photosystems with which it is closely associated. Functions in a far-red LHC by absorbing far-red light and promoting photosystem II (PSII) excitation, likely with entropy-driven uphill excitation energy transfer. Exhibits a typical absorption band at 671 nm (Qy band), as well as a large far-red absorption band at 706.5 together with fluorescence emission at around 713 nm (F713). This chain is Chlorophyll a-b binding protein 1, chloroplastic, found in Prasiola crispa (Green alga).